A 545-amino-acid chain; its full sequence is Chaperonin GroEL (545 aa).

ATP contacts are provided by residues 30 to 33 (TLGP), Lys-51, 87 to 91 (DGTTT), Gly-415, and Asp-495.

Belongs to the chaperonin (HSP60) family. In terms of assembly, forms a cylinder of 14 subunits composed of two heptameric rings stacked back-to-back. Interacts with the co-chaperonin GroES.

It localises to the cytoplasm. It carries out the reaction ATP + H2O + a folded polypeptide = ADP + phosphate + an unfolded polypeptide.. Together with its co-chaperonin GroES, plays an essential role in assisting protein folding. The GroEL-GroES system forms a nano-cage that allows encapsulation of the non-native substrate proteins and provides a physical environment optimized to promote and accelerate protein folding. The chain is Chaperonin GroEL from Yersinia pestis bv. Antiqua (strain Antiqua).